Consider the following 552-residue polypeptide: Putative transport protein ECA4401 (552 aa).

Transmembrane regions (helical) follow at residues 4 to 24 (IALTVSMLALVAVLGLWIGNW), 26 to 46 (IYGVGLGIGGVLFGGIIVGHV), 65 to 85 (FGLILFVYTIGIQVGPGFFSS), 90 to 112 (GLRLNAFALLTVFLGSVVTVMLH), and 158 to 178 (TGYAMAYPLGICGILLVMWLM). 2 RCK C-terminal domains span residues 191-276 (KQFE…VIGN) and 279-361 (ETSL…IVGN). A run of 6 helical transmembrane segments spans residues 371–391 (MLPVFIGIGLGVLLGSVPLMV), 393–413 (GFPVALRLGLAGGPLVVALVL), 439–459 (IVLFLSVVGLKSGGDFVDTLL), 464–484 (VWWIGYGALITIVPLLAVGIL), 493–513 (YLTLCGMLAGSMTDPPALAFA), and 530–550 (VYPLAMFLRIMSPQLLAVLFL).

The protein belongs to the AAE transporter (TC 2.A.81) family. YidE subfamily.

It localises to the cell membrane. The sequence is that of Putative transport protein ECA4401 from Pectobacterium atrosepticum (strain SCRI 1043 / ATCC BAA-672) (Erwinia carotovora subsp. atroseptica).